The sequence spans 252 residues: MLKMRIIPCLDVKDGRVVKGVNFVDLIDAGDPVEQAKLYDKAGADELTFLDITASHENRDTIYDVVRRTAEQCFMPLTVGGGVRVNDDIRKLLLAGADKVSINTAAVHRPEFVREAAEKFGSQCIVVAIDAKQTGPGKFEIFTHGGRNATGIDAVEWARRMTEYGAGEILLTSMDRDGTKQGFNIPLTRAVADAVTVPVIASGGVGNLDHLVEGIRDGHATAVLAASIFHFGTYTIAQAKAHMRAAGIPVRP.

Residues D11 and D130 contribute to the active site.

Belongs to the HisA/HisF family. As to quaternary structure, heterodimer of HisH and HisF.

The protein localises to the cytoplasm. The catalysed reaction is 5-[(5-phospho-1-deoxy-D-ribulos-1-ylimino)methylamino]-1-(5-phospho-beta-D-ribosyl)imidazole-4-carboxamide + L-glutamine = D-erythro-1-(imidazol-4-yl)glycerol 3-phosphate + 5-amino-1-(5-phospho-beta-D-ribosyl)imidazole-4-carboxamide + L-glutamate + H(+). The protein operates within amino-acid biosynthesis; L-histidine biosynthesis; L-histidine from 5-phospho-alpha-D-ribose 1-diphosphate: step 5/9. Its function is as follows. IGPS catalyzes the conversion of PRFAR and glutamine to IGP, AICAR and glutamate. The HisF subunit catalyzes the cyclization activity that produces IGP and AICAR from PRFAR using the ammonia provided by the HisH subunit. The polypeptide is Imidazole glycerol phosphate synthase subunit HisF (Paramagnetospirillum magneticum (strain ATCC 700264 / AMB-1) (Magnetospirillum magneticum)).